The following is a 327-amino-acid chain: uncharacterized protein (327 aa).

A helical membrane pass occupies residues 13–33 (IICIISIIVLLLIIISLYPHK).

It is found in the membrane. This is an uncharacterized protein from Caenorhabditis elegans.